Here is a 247-residue protein sequence, read N- to C-terminus: Probable cyclic nucleotide phosphodiesterase XBJ1_0953 (247 aa).

Positions 8, 10, 52, 82, 154, 192, and 194 each coordinate Fe cation. AMP contacts are provided by residues His10, Asp52, and 82 to 83 (NH). His194 contacts AMP.

It belongs to the cyclic nucleotide phosphodiesterase class-III family. The cofactor is Fe(2+).

The polypeptide is Probable cyclic nucleotide phosphodiesterase XBJ1_0953 (Xenorhabdus bovienii (strain SS-2004) (Xenorhabdus nematophila subsp. bovienii)).